A 100-amino-acid chain; its full sequence is Omega-hexatoxin-Asp2a (100 aa).

The N-terminal stretch at 1–23 (MKFSKLSITLAVILTQAVFVLCG) is a signal peptide. A propeptide spanning residues 24–55 (MKNEDFMEKGLESNELHDAIKKPVNSGKPDTE) is cleaved from the precursor. 3 cysteine pairs are disulfide-bonded: cysteine 60–cysteine 73, cysteine 66–cysteine 79, and cysteine 72–cysteine 84.

This sequence belongs to the neurotoxin 15 family. 02 (omega-actx) subfamily. Expressed by the venom gland.

The protein resides in the secreted. Functionally, potent inhibitor of insect, but not mammalian, voltage-gated calcium channels (Cav). The sequence is that of Omega-hexatoxin-Asp2a from Atrax sp. (strain Illawarra) (Funnel-web spider).